The primary structure comprises 122 residues: Large ribosomal subunit protein bL12 (122 aa).

This sequence belongs to the bacterial ribosomal protein bL12 family. As to quaternary structure, homodimer. Part of the ribosomal stalk of the 50S ribosomal subunit. Forms a multimeric L10(L12)X complex, where L10 forms an elongated spine to which 2 to 4 L12 dimers bind in a sequential fashion. Binds GTP-bound translation factors.

Forms part of the ribosomal stalk which helps the ribosome interact with GTP-bound translation factors. Is thus essential for accurate translation. The protein is Large ribosomal subunit protein bL12 of Streptococcus thermophilus (strain ATCC BAA-491 / LMD-9).